Here is a 481-residue protein sequence, read N- to C-terminus: GDP-fucose protein O-fucosyltransferase 2 (481 aa).

The first 22 residues, methionine 1–asparagine 22, serve as a signal peptide directing secretion. GDP-beta-L-fucose contacts are provided by residues glycine 59–asparagine 63, histidine 287–arginine 289, aspartate 365, and arginine 382–phenylalanine 383. Residue glutamate 60 is the Proton acceptor of the active site.

Belongs to the glycosyltransferase 68 family.

It localises to the endoplasmic reticulum. The catalysed reaction is L-seryl-[protein] + GDP-beta-L-fucose = 3-O-(alpha-L-fucosyl)-L-seryl-[protein] + GDP + H(+). It carries out the reaction L-threonyl-[protein] + GDP-beta-L-fucose = 3-O-(alpha-L-fucosyl)-L-threonyl-[protein] + GDP + H(+). It functions in the pathway protein modification; protein glycosylation. Catalyzes the reaction that attaches fucose through an O-glycosidic linkage to a conserved serine or threonine residue in the consensus sequence C1-X-X-S/T-C2 of thrombospondin type I repeats (TSRs) where C1 and C2 are the first and second cysteines of the repeat, respectively. O-fucosylates sporozoite proteins CSP and TRAP. O-fucosylation regulates stability and intracellular trafficking of TRAP but not of CSP. Probably by regulating protein O-fucosylation, may play a role in parasite transmission to the mosquito vector and/or infection of the vertebrate host hepatocytes; however, POFUT2 involvement in transmission/infection is controversial. The chain is GDP-fucose protein O-fucosyltransferase 2 from Plasmodium vivax (strain Salvador I).